Consider the following 183-residue polypeptide: Bifunctional protein PyrR (183 aa).

Residues 42–43, arginine 87, 104–112, arginine 137, and valine 161 each bind substrate; these read TR and DDVLYTGRT. The PRPP-binding motif lies at 100 to 112; sequence VILVDDVLYTGRT.

Belongs to the purine/pyrimidine phosphoribosyltransferase family. PyrR subfamily.

It carries out the reaction UMP + diphosphate = 5-phospho-alpha-D-ribose 1-diphosphate + uracil. Regulates the transcription of the pyrimidine nucleotide (pyr) operon in response to exogenous pyrimidines. Functionally, also displays a weak uracil phosphoribosyltransferase activity which is not physiologically significant. This is Bifunctional protein PyrR from Deinococcus radiodurans (strain ATCC 13939 / DSM 20539 / JCM 16871 / CCUG 27074 / LMG 4051 / NBRC 15346 / NCIMB 9279 / VKM B-1422 / R1).